We begin with the raw amino-acid sequence, 142 residues long: Hemoglobin subunit alpha-A (142 aa).

Residues 2–142 (VLTAGDKANV…VATALTSKYR (141 aa)) enclose the Globin domain. Residues H59 and H88 each coordinate heme b.

Belongs to the globin family. Heterotetramer of two alpha-A chains and two beta chains. As to expression, red blood cells.

In terms of biological role, involved in oxygen transport from the lung to the various peripheral tissues. The polypeptide is Hemoglobin subunit alpha-A (Chelonoidis niger (Galapagos giant tortoise)).